A 189-amino-acid chain; its full sequence is UPF0301 protein RMA_0049 (189 aa).

The protein belongs to the UPF0301 (AlgH) family.

This chain is UPF0301 protein RMA_0049, found in Rickettsia massiliae (strain Mtu5).